Consider the following 1024-residue polypeptide: Protein tiptop (1024 aa).

Residues 20–35 show a composition bias toward polar residues; the sequence is ELTSPRCQSRDSNTSA. Disordered regions lie at residues 20 to 40 and 138 to 215; these read ELTS…AGAG and EGEV…ISAD. The segment covering 159-175 has biased composition (acidic residues); sequence DDQEEDQEQDQEQEQEQ. The C2H2-type 1 zinc-finger motif lies at 317-341; the sequence is FKCVWCKQSFSTLANLTAHMKETQH. The interval 350-392 is disordered; that stretch reads LPTGGVGTPSAPPPTRLATSASNSACSSSSSSTSSSSNSSKSE. Residues 368-391 show a composition bias toward low complexity; that stretch reads TSASNSACSSSSSSTSSSSNSSKS. The C2H2-type 2 zinc finger occupies 426-450; sequence LKCMWCGQSFRSLAEMTSHMQETQH. Disordered stretches follow at residues 466–489, 519–576, 712–759, 786–818, and 868–891; these read GDER…SSPS, AQKS…SLDS, SRDR…IKAE, FSME…SLLA, and ETTD…ASAT. Over residues 477 to 489 the composition is skewed to low complexity; it reads VPSTSTAAPSSPS. Residues 499–523 form a C2H2-type 3 zinc finger; that stretch reads LTCKVCDQAFGSLKELSTHMAQKSH. A compositionally biased stretch (low complexity) spans 527 to 537; that stretch reads SPAPSASPPAA. The segment covering 543–558 has biased composition (basic residues); the sequence is KRGRQNRNEKRKKSLP. Residues 718 to 729 show a composition bias toward low complexity; it reads SESSSASRVESS. Positions 745 to 755 are enriched in pro residues; sequence TPAPPPPPPPT. Residues 786 to 795 show a composition bias toward basic and acidic residues; that stretch reads FSMEACRESP. Residues 796 to 808 are compositionally biased toward polar residues; it reads RSVSKSPAPQTER. Positions 874–891 are enriched in low complexity; sequence STGLRSASSAGSSTASAT. The C2H2-type 4 zinc finger occupies 926–949; it reads IKCSYCDTPFASKGAYRHHLSKVH. Residues 954–1004 form a disordered region; the sequence is AGEDSPRLKSPAVQSPRSMPLASPRRSASRSPATGSQQPPPSPTISPYDES. Low complexity predominate over residues 968–990; sequence SPRSMPLASPRRSASRSPATGSQ.

The protein belongs to the teashirt C2H2-type zinc-finger protein family. In terms of tissue distribution, expression in the Malpighian tubules (MTs) and stomatogastric nervous system starts at embryonic stage 10. At stage 11, expression in the head domain is initiated in the clypeolabrum in two bilaterally symmetric clusters of cells. At stage 12, expression appears in the central nervous system (CNS) of the trunk and the epidermis. The staining in the hindgut is maintained throughout embryogenesis. At stage 13, expression is present in elongating MTs. The anterior staining is detected in cells that invaginate into the stomodeum and by stage 15 onwards, in cells close to the pharynx. Also expressed in cells of the brain, the second constriction of the gut, the trunk epidermis, the anterior segments of the CNS (the three thoracic and the first two abdominal segments) and in the MTs. From stage 12 onwards, tsh and tio are colocalized in some cells.

It is found in the nucleus. Its function is as follows. Tiptop (tio) and teashirt (tsh) have, on the whole, common activities. Tio and tsh repress each other's expression and tsh has a crucial role for trunk patterning that is in part masked by ectopic expression of tiptop. Both genes share a common activity required for the activation of Ser and svb and the maintenance of en and wg. This chain is Protein tiptop (tio), found in Drosophila melanogaster (Fruit fly).